We begin with the raw amino-acid sequence, 31 residues long: Cytochrome b6-f complex subunit 6 (31 aa).

Residues 4–24 (ITSYFGFLLAALTITSALFIG) traverse the membrane as a helical segment.

Belongs to the PetL family. As to quaternary structure, the 4 large subunits of the cytochrome b6-f complex are cytochrome b6, subunit IV (17 kDa polypeptide, PetD), cytochrome f and the Rieske protein, while the 4 small subunits are PetG, PetL, PetM and PetN. The complex functions as a dimer.

The protein resides in the plastid. It is found in the chloroplast thylakoid membrane. Its function is as follows. Component of the cytochrome b6-f complex, which mediates electron transfer between photosystem II (PSII) and photosystem I (PSI), cyclic electron flow around PSI, and state transitions. PetL is important for photoautotrophic growth as well as for electron transfer efficiency and stability of the cytochrome b6-f complex. The polypeptide is Cytochrome b6-f complex subunit 6 (Citrus sinensis (Sweet orange)).